The sequence spans 229 residues: tRNA pseudouridine synthase B (229 aa).

Asp42 functions as the Nucleophile in the catalytic mechanism.

This sequence belongs to the pseudouridine synthase TruB family. Type 1 subfamily.

The catalysed reaction is uridine(55) in tRNA = pseudouridine(55) in tRNA. In terms of biological role, responsible for synthesis of pseudouridine from uracil-55 in the psi GC loop of transfer RNAs. The chain is tRNA pseudouridine synthase B from Ureaplasma urealyticum serovar 10 (strain ATCC 33699 / Western).